The following is a 214-amino-acid chain: Large ribosomal subunit protein uL6m (214 aa).

A mitochondrion-targeting transit peptide spans 1-16; sequence MSFIQRRLLSQTLFLR.

This sequence belongs to the universal ribosomal protein uL6 family. Component of the mitochondrial large ribosomal subunit (mt-LSU). Mature yeast 74S mitochondrial ribosomes consist of a small (37S) and a large (54S) subunit. The 37S small subunit contains a 15S ribosomal RNA (15S mt-rRNA) and 34 different proteins. The 54S large subunit contains a 21S rRNA (21S mt-rRNA) and 46 different proteins.

It localises to the mitochondrion. In terms of biological role, component of the mitochondrial ribosome (mitoribosome), a dedicated translation machinery responsible for the synthesis of mitochondrial genome-encoded proteins, including at least some of the essential transmembrane subunits of the mitochondrial respiratory chain. The mitoribosomes are attached to the mitochondrial inner membrane and translation products are cotranslationally integrated into the membrane. The sequence is that of Large ribosomal subunit protein uL6m (MRPL6) from Saccharomyces cerevisiae (strain ATCC 204508 / S288c) (Baker's yeast).